A 263-amino-acid chain; its full sequence is Tryptophan synthase alpha chain (263 aa).

Active-site proton acceptor residues include glutamate 49 and aspartate 60.

Belongs to the TrpA family. As to quaternary structure, tetramer of two alpha and two beta chains.

It catalyses the reaction (1S,2R)-1-C-(indol-3-yl)glycerol 3-phosphate + L-serine = D-glyceraldehyde 3-phosphate + L-tryptophan + H2O. Its pathway is amino-acid biosynthesis; L-tryptophan biosynthesis; L-tryptophan from chorismate: step 5/5. In terms of biological role, the alpha subunit is responsible for the aldol cleavage of indoleglycerol phosphate to indole and glyceraldehyde 3-phosphate. The chain is Tryptophan synthase alpha chain from Jannaschia sp. (strain CCS1).